A 142-amino-acid chain; its full sequence is Fluoride-specific ion channel FluC 1 (142 aa).

The next 4 membrane-spanning stretches (helical) occupy residues 23 to 43, 54 to 74, 79 to 99, and 116 to 136; these read VNIA…YLID, LPLG…GLIG, GWLL…FSTF, and LGNV…AVSL. Na(+) is bound by residues glycine 91 and threonine 94.

Belongs to the fluoride channel Fluc/FEX (TC 1.A.43) family.

It localises to the cell membrane. The catalysed reaction is fluoride(in) = fluoride(out). Na(+) is not transported, but it plays an essential structural role and its presence is essential for fluoride channel function. In terms of biological role, fluoride-specific ion channel. Important for reducing fluoride concentration in the cell, thus reducing its toxicity. This Nocardia farcinica (strain IFM 10152) protein is Fluoride-specific ion channel FluC 1.